Here is a 175-residue protein sequence, read N- to C-terminus: RNA pyrophosphohydrolase (175 aa).

A Nudix hydrolase domain is found at 6-149 (GYRPNVGIIL…KRQVYQQALT (144 aa)). Residues 38–59 (GGIKHGESPEQAMYRELYEEVG) carry the Nudix box motif.

Belongs to the Nudix hydrolase family. RppH subfamily. Requires a divalent metal cation as cofactor.

Its function is as follows. Accelerates the degradation of transcripts by removing pyrophosphate from the 5'-end of triphosphorylated RNA, leading to a more labile monophosphorylated state that can stimulate subsequent ribonuclease cleavage. In Azoarcus sp. (strain BH72), this protein is RNA pyrophosphohydrolase.